The chain runs to 172 residues: NADH-quinone oxidoreductase subunit B 1 (172 aa).

[4Fe-4S] cluster-binding residues include C42, C43, C107, and C137.

The protein belongs to the complex I 20 kDa subunit family. In terms of assembly, NDH-1 is composed of 14 different subunits. Subunits NuoB, C, D, E, F, and G constitute the peripheral sector of the complex. The cofactor is [4Fe-4S] cluster.

The protein resides in the cell inner membrane. It carries out the reaction a quinone + NADH + 5 H(+)(in) = a quinol + NAD(+) + 4 H(+)(out). In terms of biological role, NDH-1 shuttles electrons from NADH, via FMN and iron-sulfur (Fe-S) centers, to quinones in the respiratory chain. Couples the redox reaction to proton translocation (for every two electrons transferred, four hydrogen ions are translocated across the cytoplasmic membrane), and thus conserves the redox energy in a proton gradient. The sequence is that of NADH-quinone oxidoreductase subunit B 1 from Anaeromyxobacter sp. (strain Fw109-5).